Reading from the N-terminus, the 207-residue chain is Outer-membrane lipoprotein LolB (207 aa).

The signal sequence occupies residues 1-21; sequence MTLPDFRLIRLLPLASLVLTA. Cys-22 is lipidated: N-palmitoyl cysteine. Cys-22 is lipidated: S-diacylglycerol cysteine.

This sequence belongs to the LolB family. Monomer.

Its subcellular location is the cell outer membrane. Plays a critical role in the incorporation of lipoproteins in the outer membrane after they are released by the LolA protein. The polypeptide is Outer-membrane lipoprotein LolB (Salmonella arizonae (strain ATCC BAA-731 / CDC346-86 / RSK2980)).